The chain runs to 167 residues: NAD(P)H-quinone oxidoreductase subunit I, chloroplastic (167 aa).

2 4Fe-4S ferredoxin-type domains span residues 55–84 (GRIH…VDWK) and 95–124 (LNYS…MTEE). Residues C64, C67, C70, C74, C104, C107, C110, and C114 each coordinate [4Fe-4S] cluster.

Belongs to the complex I 23 kDa subunit family. In terms of assembly, NDH is composed of at least 16 different subunits, 5 of which are encoded in the nucleus. [4Fe-4S] cluster serves as cofactor.

The protein localises to the plastid. It is found in the chloroplast thylakoid membrane. The catalysed reaction is a plastoquinone + NADH + (n+1) H(+)(in) = a plastoquinol + NAD(+) + n H(+)(out). It catalyses the reaction a plastoquinone + NADPH + (n+1) H(+)(in) = a plastoquinol + NADP(+) + n H(+)(out). In terms of biological role, NDH shuttles electrons from NAD(P)H:plastoquinone, via FMN and iron-sulfur (Fe-S) centers, to quinones in the photosynthetic chain and possibly in a chloroplast respiratory chain. The immediate electron acceptor for the enzyme in this species is believed to be plastoquinone. Couples the redox reaction to proton translocation, and thus conserves the redox energy in a proton gradient. The chain is NAD(P)H-quinone oxidoreductase subunit I, chloroplastic from Panax ginseng (Korean ginseng).